The chain runs to 456 residues: Histidine--tRNA ligase (456 aa).

This sequence belongs to the class-II aminoacyl-tRNA synthetase family. In terms of assembly, homodimer.

It localises to the cytoplasm. It catalyses the reaction tRNA(His) + L-histidine + ATP = L-histidyl-tRNA(His) + AMP + diphosphate + H(+). This Christiangramia forsetii (strain DSM 17595 / CGMCC 1.15422 / KT0803) (Gramella forsetii) protein is Histidine--tRNA ligase.